The primary structure comprises 883 residues: Translation initiation factor IF-2 (883 aa).

Residues 1-259 are disordered; the sequence is MVDTKTPGDK…GASKQRGRLT (259 aa). 2 stretches are compositionally biased toward low complexity: residues 10 to 22 and 77 to 89; these read KTLTMPTKTLTLK and PRQQQSRPAPQQS. The segment covering 113-184 has biased composition (basic and acidic residues); that stretch reads ARVREIEERK…GDAEPAKKPA (72 aa). Residues 185 to 218 show a composition bias toward low complexity; the sequence is ETSTTTTTAAPARPATTTTRTPTPAGRPPAVAAE. A compositionally biased stretch (pro residues) spans 235–244; that stretch reads PARPAPPPKQ. Residues 379 to 548 enclose the tr-type G domain; sequence PRSPVVTVMG…MIALQAEILE (170 aa). The interval 388 to 395 is G1; it reads GHVDHGKT. 388–395 lines the GTP pocket; it reads GHVDHGKT. A G2 region spans residues 413 to 417; it reads GITQH. The segment at 436 to 439 is G3; the sequence is DTPG. GTP is bound by residues 436–440 and 490–493; these read DTPGH and NKID. Residues 490–493 form a G4 region; sequence NKID. The tract at residues 526–528 is G5; sequence SAK.

The protein belongs to the TRAFAC class translation factor GTPase superfamily. Classic translation factor GTPase family. IF-2 subfamily.

The protein resides in the cytoplasm. In terms of biological role, one of the essential components for the initiation of protein synthesis. Protects formylmethionyl-tRNA from spontaneous hydrolysis and promotes its binding to the 30S ribosomal subunits. Also involved in the hydrolysis of GTP during the formation of the 70S ribosomal complex. The polypeptide is Translation initiation factor IF-2 (Rhodopseudomonas palustris (strain ATCC BAA-98 / CGA009)).